Here is a 159-residue protein sequence, read N- to C-terminus: Cyclic pyranopterin monophosphate synthase (159 aa).

Substrate contacts are provided by residues 75 to 77 (LCH) and 113 to 114 (ME). Residue aspartate 128 is part of the active site.

Belongs to the MoaC family. In terms of assembly, homohexamer; trimer of dimers.

It carries out the reaction (8S)-3',8-cyclo-7,8-dihydroguanosine 5'-triphosphate = cyclic pyranopterin phosphate + diphosphate. It functions in the pathway cofactor biosynthesis; molybdopterin biosynthesis. In terms of biological role, catalyzes the conversion of (8S)-3',8-cyclo-7,8-dihydroguanosine 5'-triphosphate to cyclic pyranopterin monophosphate (cPMP). This chain is Cyclic pyranopterin monophosphate synthase, found in Thiobacillus denitrificans (strain ATCC 25259 / T1).